The primary structure comprises 378 residues: Flagellin E (378 aa).

Coiled coils occupy residues 98 to 139 (QSAN…KLLN) and 311 to 339 (MQNR…IKDA).

Belongs to the bacterial flagellin family. In terms of assembly, heteromer of multiple flagellin subunits including FlaA, FlaB, FlaC, FlaD and FlaE.

It is found in the secreted. It localises to the bacterial flagellum. Flagellin is the subunit protein which polymerizes to form the filaments of bacterial flagella. FlaE is not essential for flagellar synthesis and motility. In Vibrio cholerae serotype O1 (strain ATCC 39541 / Classical Ogawa 395 / O395), this protein is Flagellin E (flaE).